The primary structure comprises 582 residues: Pineapple eye protein (582 aa).

The segment at 6–44 (ELQCLICKYSDTDDLVFGEWMIVRNLQVHYFCLLLSTHL) adopts a C2HC pre-PHD-type zinc-finger fold. Residues 6–119 (ELQCLICKYS…QYKSYCYKCR (114 aa)) are extended PHD domain (ePHD). The PHD-type; atypical zinc-finger motif lies at 72–119 (RKCWYCNKIGASLQCDRCRSLFHLKCGLENRAVFEFCGQYKSYCYKCR). 2 disordered regions span residues 292-311 (PART…DGSF) and 323-422 (RSLT…ASEI). Over residues 340 to 363 (SSNITVIFSQPKSNATSERLSLSP) the composition is skewed to polar residues. Over residues 383 to 399 (SIDENHSPQPIARRDTS) the composition is skewed to basic and acidic residues.

Required for survival of imaginal disk cells possibly by regulation of cell apoptosis. Required for germline stem cell self-renewal through mediation of BMP signaling. The protein is Pineapple eye protein of Drosophila melanogaster (Fruit fly).